Consider the following 418-residue polypeptide: Probable cysteine desulfurase 2 (418 aa).

At K234 the chain carries N6-(pyridoxal phosphate)lysine. The active-site Cysteine persulfide intermediate is the C374.

It belongs to the class-V pyridoxal-phosphate-dependent aminotransferase family. Csd subfamily. Pyridoxal 5'-phosphate is required as a cofactor.

The enzyme catalyses (sulfur carrier)-H + L-cysteine = (sulfur carrier)-SH + L-alanine. Its function is as follows. Catalyzes the removal of elemental sulfur and selenium atoms from L-cysteine, L-cystine, L-selenocysteine, and L-selenocystine to produce L-alanine. This chain is Probable cysteine desulfurase 2 (csd2), found in Mycobacterium leprae (strain TN).